Reading from the N-terminus, the 394-residue chain is uncharacterized protein (394 aa).

11 consecutive transmembrane segments (helical) span residues 10–30 (PALI…NYYA), 50–70 (FIVT…VPLG), 79–99 (IVSM…SQSL), 100–120 (AMMI…QILV), 138–158 (TIMS…GLLA), 166–186 (VFWV…RGLP), 218–238 (LLGC…AFLL), 243–263 (FNYS…GALG), 291–311 (WLAI…ILVL), 337–357 (LTAG…LISA), and 364–384 (GWAG…LVWW).

This sequence belongs to the major facilitator superfamily.

The protein resides in the cell inner membrane. This is an uncharacterized protein from Escherichia coli O157:H7.